A 368-amino-acid polypeptide reads, in one-letter code: 3-dehydroquinate synthase (368 aa).

This sequence belongs to the archaeal-type DHQ synthase family.

The catalysed reaction is 2-amino-2,3,7-trideoxy-D-lyxo-hept-6-ulosonate + NAD(+) + H2O = 3-dehydroquinate + NH4(+) + NADH + H(+). Its function is as follows. Catalyzes the oxidative deamination and cyclization of 2-amino-3,7-dideoxy-D-threo-hept-6-ulosonic acid (ADH) to yield 3-dehydroquinate (DHQ), which is fed into the canonical shikimic pathway of aromatic amino acid biosynthesis. This Methanobrevibacter smithii (strain ATCC 35061 / DSM 861 / OCM 144 / PS) protein is 3-dehydroquinate synthase.